A 374-amino-acid polypeptide reads, in one-letter code: O-methyltransferase acrG (374 aa).

Residues Y19, N70, D96, S128, and F129 each coordinate S-adenosyl-L-homocysteine. F245 is a binding site for Mg(2+).

This sequence belongs to the methyltransferase superfamily. Type-7 methyltransferase family.

It participates in secondary metabolite biosynthesis. Functionally, O-methyltransferase; part of the cluster that mediates the biosynthesis of acurin A, a highly reduced polyketide coupled to a serine via a peptide bond. The activities of the highly reducing polyketide synthase acrA and the nonribosomal peptide synthetase acrB are collectively responsible for the synthesis of the acurin A core structure with a heptaketide backbone produced by acrA covalently fused to a L-serine by acrB. After the formation of the PK-NRP hybrid product, it is detached from acrB by reductive release to set up the formation of the lactam ring by aldol condensation. The hydrolyase acrC then catalyzes water loss to generate a double bond in the ring. This double bond is probably reduced, which is followed by three oxidations at C-22 to generate the carboxylic acid moiety, involving probably the FAD-binding monooxygenase acrE and the cytochrome P450 monooxygenases acrD and acrF. Finally, a last methylation step performed by the O-methyltransferase acrG leads to the production of acurin A. This chain is O-methyltransferase acrG, found in Aspergillus aculeatus (strain ATCC 16872 / CBS 172.66 / WB 5094).